Here is a 258-residue protein sequence, read N- to C-terminus: MKITKLEKKKRLYLMELDNGDKCYITEDTIVRFMLSRDKVISEEELKEIQDFAQFSYGKNLALYHLSFKARTEKEVREYLKKYDIDKNIVSQVIANLKEDKWINDGQYAYAIINANQLSGDKGPYVLTQKLAQKGISKSTIEEILNDFDFSEVAQRVANKLLKKYEGKLPARALQDKIIQNLTNKGFSYSDAKIAFDDLDSQVDQETTQELIFKELDKQYTKYARKYEGYELKQRLTQVLARKGYDFSDIASALREYL.

Belongs to the RecX family.

It localises to the cytoplasm. Functionally, modulates RecA activity. This Streptococcus pneumoniae serotype 19F (strain G54) protein is Regulatory protein RecX.